The sequence spans 307 residues: Deaminated glutathione amidase, chloroplastic/cytosolic (307 aa).

A chloroplast-targeting transit peptide spans 1–36 (MNAYSVSLDFTKPSLFTRITLSSQIPLTMATTVNKT). The 250-residue stretch at 37 to 286 (VRVAAAQMTS…TGIVVADIDF (250 aa)) folds into the CN hydrolase domain. E76 (proton acceptor) is an active-site residue. The active-site Proton donor is K147. The active-site Nucleophile is the C188.

Belongs to the nitrilase superfamily. NIT1/NIT2 family.

It localises to the plastid. It is found in the chloroplast. The protein localises to the cytoplasm. The catalysed reaction is N-(4-oxoglutaryl)-L-cysteinylglycine + H2O = L-cysteinylglycine + 2-oxoglutarate. It carries out the reaction N-(4-carboxy-4-oxobutanoyl)-L-ethylglycylglycine + H2O = N-(2-aminobutanoyl)glycine + 2-oxoglutarate. In terms of biological role, catalyzes the hydrolysis of the amide bond in N-(4-oxoglutarate)-L-cysteinylglycine (deaminated glutathione), a metabolite repair reaction to dispose of the harmful deaminated glutathione. Possesses amidase activity toward deaminated ophthalmate in vitro. This Arabidopsis thaliana (Mouse-ear cress) protein is Deaminated glutathione amidase, chloroplastic/cytosolic.